An 80-amino-acid chain; its full sequence is Conotoxin Pu11.1 (80 aa).

Residues 1-19 form the signal peptide; that stretch reads MKLVLAIVLILMLLSLSTG. The propeptide occupies 20 to 42; that stretch reads AEMSDNHASRSATALTDRLLGPK. 4 cysteine pairs are disulfide-bonded: Cys46/Cys60, Cys53/Cys65, Cys59/Cys72, and Cys64/Cys79.

This sequence belongs to the conotoxin I3 superfamily. As to expression, expressed by the venom duct.

Its subcellular location is the secreted. The sequence is that of Conotoxin Pu11.1 from Conus pulicarius (Flea-bitten cone).